The following is a 1281-amino-acid chain: Dynactin subunit 1 (1281 aa).

The segment at 1 to 25 is disordered; that stretch reads MAQSKRHVYSRTPSGSRMSAEASAR. The CAP-Gly domain maps to 48-90; the sequence is GATLFATGKWVGVILDEAKGKNDGTVQGRKYFTCDEGHGIFVR. The tract at residues 99 to 225 is disordered; sequence DGADTTSPET…EEEGLRAQVR (127 aa). A compositionally biased stretch (polar residues) spans 102–114; sequence DTTSPETPDSSAS. Phosphothreonine occurs at positions 108, 145, 146, and 147. Basic residues predominate over residues 129–152; it reads SKLRGPKPKKAPTARKTTTRRPKP. A compositionally biased stretch (low complexity) spans 161 to 205; sequence AGASSSLGPSGSASAGELSSSEPSTPAQTPLAAPIIPTPALTSPG. A phosphoserine mark is found at Ser179 and Ser212. Residues 214–225 are compositionally biased toward basic and acidic residues; it reads SKEEEGLRAQVR. 2 coiled-coil regions span residues 217–540 and 952–1043; these read EEGL…QQEA and IKEL…QSKR. The interaction with HPS6 stretch occupies residues 911 to 1281; that stretch reads EYDAERPPSK…LHQLHDRLIS (371 aa). Residues 1065–1084 form a disordered region; the sequence is GEEQQRGGAPGQAPGIVPGP.

The protein belongs to the dynactin 150 kDa subunit family. In terms of assembly, monomer and homodimer. Subunit of dynactin, a multiprotein complex part of a tripartite complex with dynein and a adapter, such as BICDL1, BICD2 or HOOK3. The dynactin complex is built around ACTR1A/ACTB filament and consists of an actin-related filament composed of a shoulder domain, a pointed end and a barbed end. Its length is defined by its flexible shoulder domain. The soulder is composed of 2 DCTN1 subunits, 4 DCTN2 and 2 DCTN3. DCTN1/p150(glued) binds directly to microtubules and to cytoplasmic dynein. The 4 DCNT2 (via N-terminus) bind the ACTR1A filament and act as molecular rulers to determine the length. The pointed end is important for binding dynein-dynactin cargo adapters. Consists of 4 subunits: ACTR10, DCNT4, DCTN5 and DCTN6. The barbed end is composed of a CAPZA1:CAPZB heterodimers, which binds ACTR1A/ACTB filament and dynactin and stabilizes dynactin. Interacts with the C-terminus of MAPRE1, MAPRE2 and MAPRE3. Interacts (via C-terminus) with SNX6. Interacts with CLN3, DYNAP, ECPAS and FBXL5. Interacts with MISP; this interaction regulates its distribution at the cell cortex. Interacts with CEP131. Interacts with CEP126. Interacts with CLIP1. Interacts with dynein intermediate chain and dynein heavy chain. Interacts with PLK1 (via POLO-box domain). Interacts with TBCB. Binds preferentially to tyrosinated microtubules than to detyrosinated microtubules. Interacts with PARD6A. Interacts with HPS6. Interacts with KIF3A. Interacts with BICD2. Interacts with DST (isoform 9). Interacts with DST (isoform 1). Identified in a complex with MREG and RILP. Interacts with BCCIP (isoform 2/alpha). Interacts with DCDC1. Interacts with AKNA. Interacts with DYNC1I2. Interacts with RUFY3 and RUFY4. Post-translationally, ubiquitinated by a SCF complex containing FBXL5, leading to its degradation by the proteasome. In terms of processing, phosphorylation by SLK at Thr-145, Thr-146 and Thr-147 targets DCTN1 to the centrosome. It is uncertain if SLK phosphorylates all three threonines or one or two of them. PLK1-mediated phosphorylation at Ser-179 is essential for its localization in the nuclear envelope, promotes its dissociation from microtubules during early mitosis and positively regulates nuclear envelope breakdown during prophase.

The protein localises to the cytoplasm. The protein resides in the cytoskeleton. Its subcellular location is the microtubule organizing center. It is found in the centrosome. It localises to the centriole. The protein localises to the spindle. The protein resides in the nucleus envelope. Its subcellular location is the cell cortex. Its function is as follows. Part of the dynactin complex that activates the molecular motor dynein for ultra-processive transport along microtubules. Plays a key role in dynein-mediated retrograde transport of vesicles and organelles along microtubules by recruiting and tethering dynein to microtubules. Binds to both dynein and microtubules providing a link between specific cargos, microtubules and dynein. Essential for targeting dynein to microtubule plus ends, recruiting dynein to membranous cargos and enhancing dynein processivity (the ability to move along a microtubule for a long distance without falling off the track). Can also act as a brake to slow the dynein motor during motility along the microtubule. Can regulate microtubule stability by promoting microtubule formation, nucleation and polymerization and by inhibiting microtubule catastrophe in neurons. Inhibits microtubule catastrophe by binding both to microtubules and to tubulin, leading to enhanced microtubule stability along the axon. Plays a role in metaphase spindle orientation. Plays a role in centriole cohesion and subdistal appendage organization and function. Its recruitment to the centriole in a KIF3A-dependent manner is essential for the maintenance of centriole cohesion and the formation of subdistal appendage. Also required for microtubule anchoring at the mother centriole. Plays a role in primary cilia formation. The chain is Dynactin subunit 1 (DCTN1) from Sus scrofa (Pig).